Reading from the N-terminus, the 339-residue chain is tRNA-splicing endonuclease (339 aa).

Residues tyrosine 274, histidine 285, and lysine 316 contribute to the active site.

Belongs to the tRNA-intron endonuclease family. Archaeal long subfamily. Homodimer. It depends on Ca(2+) as a cofactor. Mg(2+) is required as a cofactor. Post-translationally, the N-terminus is blocked.

It carries out the reaction pretRNA = a 3'-half-tRNA molecule with a 5'-OH end + a 5'-half-tRNA molecule with a 2',3'-cyclic phosphate end + an intron with a 2',3'-cyclic phosphate and a 5'-hydroxyl terminus.. Endonuclease that removes tRNA introns. Cleaves pre-tRNA at the 5'- and 3'-splice sites to release the intron. The products are an intron and two tRNA half-molecules bearing 2',3' cyclic phosphate and 5'-OH termini. Recognizes a pseudosymmetric substrate in which 2 bulged loops of 3 bases are separated by a stem of 4 bp. This chain is tRNA-splicing endonuclease, found in Haloferax volcanii (strain ATCC 29605 / DSM 3757 / JCM 8879 / NBRC 14742 / NCIMB 2012 / VKM B-1768 / DS2) (Halobacterium volcanii).